We begin with the raw amino-acid sequence, 207 residues long: LexA repressor (207 aa).

The segment at residues arginine 28–lysine 48 is a DNA-binding region (H-T-H motif). Residues serine 124 and lysine 161 each act as for autocatalytic cleavage activity in the active site.

This sequence belongs to the peptidase S24 family. Homodimer.

It carries out the reaction Hydrolysis of Ala-|-Gly bond in repressor LexA.. Functionally, represses a number of genes involved in the response to DNA damage (SOS response), including recA and lexA. In the presence of single-stranded DNA, RecA interacts with LexA causing an autocatalytic cleavage which disrupts the DNA-binding part of LexA, leading to derepression of the SOS regulon and eventually DNA repair. The chain is LexA repressor from Aliivibrio salmonicida (strain LFI1238) (Vibrio salmonicida (strain LFI1238)).